The sequence spans 563 residues: Inositol-3-phosphate synthase 1-A (563 aa).

The protein belongs to the myo-inositol 1-phosphate synthase family. Requires NAD(+) as cofactor.

The protein localises to the cytoplasm. It catalyses the reaction D-glucose 6-phosphate = 1D-myo-inositol 3-phosphate. The protein operates within polyol metabolism; myo-inositol biosynthesis; myo-inositol from D-glucose 6-phosphate: step 1/2. Functionally, key enzyme in myo-inositol biosynthesis pathway that catalyzes the conversion of glucose 6-phosphate to 1-myo-inositol 1-phosphate in a NAD-dependent manner. Rate-limiting enzyme in the synthesis of all inositol-containing compounds. The sequence is that of Inositol-3-phosphate synthase 1-A (isyna1-a) from Xenopus laevis (African clawed frog).